The sequence spans 265 residues: Type II pantothenate kinase (265 aa).

Residue 6-13 (DAGGTLIK) participates in ATP binding. Catalysis depends on Glu70, which acts as the Proton acceptor. ATP contacts are provided by residues Thr99, 121-125 (GGMIQ), Tyr137, and Ser225.

It belongs to the type II pantothenate kinase family. In terms of assembly, homodimer.

Its subcellular location is the cytoplasm. It catalyses the reaction (R)-pantothenate + ATP = (R)-4'-phosphopantothenate + ADP + H(+). The protein operates within cofactor biosynthesis; coenzyme A biosynthesis; CoA from (R)-pantothenate: step 1/5. In terms of biological role, catalyzes the phosphorylation of pantothenate (Pan), the first step in CoA biosynthesis. This chain is Type II pantothenate kinase, found in Staphylococcus saprophyticus subsp. saprophyticus (strain ATCC 15305 / DSM 20229 / NCIMB 8711 / NCTC 7292 / S-41).